Here is a 63-residue protein sequence, read N- to C-terminus: Small ribosomal subunit protein eS17 (63 aa).

It belongs to the eukaryotic ribosomal protein eS17 family.

The chain is Small ribosomal subunit protein eS17 from Methanococcus maripaludis (strain DSM 14266 / JCM 13030 / NBRC 101832 / S2 / LL).